The primary structure comprises 201 residues: Kunitz type trypsin inhibitor 104 (201 aa).

An N-terminal signal peptide occupies residues 1–24; it reads MSTRSLTIFILAHVWLLMATTSIA. Intrachain disulfides connect cysteine 63-cysteine 110, cysteine 161-cysteine 173, and cysteine 166-cysteine 169.

It belongs to the protease inhibitor I3 (leguminous Kunitz-type inhibitor) family. In terms of assembly, interacts with CP.

It localises to the secreted. Its subcellular location is the extracellular space. The protein localises to the apoplast. Protease inhibitor involved in the control of mycorrhiza establishment and arbuscule development during root colonization by arbuscular mycorrhizal (AM) fungi (e.g. Rhizophagus irregularis). This is Kunitz type trypsin inhibitor 104 from Medicago truncatula (Barrel medic).